A 115-amino-acid chain; its full sequence is Large ribosomal subunit protein uL24 (115 aa).

Disordered regions lie at residues 45–77 (VRQSQKNPQGGRLNKEMPMSASNVMLVDPSTGK) and 96–115 (KASGESLGQIAPAKASKAAS).

The protein belongs to the universal ribosomal protein uL24 family. Part of the 50S ribosomal subunit.

Functionally, one of two assembly initiator proteins, it binds directly to the 5'-end of the 23S rRNA, where it nucleates assembly of the 50S subunit. Its function is as follows. One of the proteins that surrounds the polypeptide exit tunnel on the outside of the subunit. This is Large ribosomal subunit protein uL24 from Rhodopirellula baltica (strain DSM 10527 / NCIMB 13988 / SH1).